The chain runs to 480 residues: RNA-binding protein 42 (480 aa).

The disordered stretch occupies residues 1 to 30 (MAGAGPAPGLPGAGGPVVPGPGAGIPGKSG). Ala2 carries the N-acetylalanine modification. Residues 11-27 (PGAGGPVVPGPGAGIPG) are compositionally biased toward gly residues. Ser135 carries the phosphoserine modification. Residues Arg153, Arg158, Arg168, and Arg181 each carry the asymmetric dimethylarginine modification. The necessary for interaction with HNRNPK stretch occupies residues 236 to 480 (ELGLGLGLGL…QKEKKKLGLR (245 aa)). Positions 319 to 356 (SLRPRPRPPRPEPPPGLMALEVPEPLGEDKKKGKPEKL) are disordered. Basic and acidic residues predominate over residues 345–356 (GEDKKKGKPEKL). The RRM domain occupies 381–459 (FRIFCGDLGN…RPIKLRKSMW (79 aa)).

It belongs to the RRM RBM42 family. Interacts with HNRNPK.

The protein resides in the nucleus. Its subcellular location is the cytoplasm. In terms of biological role, binds (via the RRM domain) to the 3'-untranslated region (UTR) of CDKN1A mRNA. The protein is RNA-binding protein 42 (RBM42) of Homo sapiens (Human).